The following is an 80-amino-acid chain: Spermatid-specific protein S2 (80 aa).

A compositionally biased stretch (basic residues) spans 1-36; that stretch reads VKSRYHQRQYRARKRYAKARRTKKPKRRPKPPRKLR. The interval 1–44 is disordered; that stretch reads VKSRYHQRQYRARKRYAKARRTKKPKRRPKPPRKLRYAPSKKQP.

It is found in the nucleus. It localises to the chromosome. In terms of biological role, involved in nuclear basic protein transition: histones are replaced by spermatid specific proteins which are themselves replaced by protamines in late spermatids. The polypeptide is Spermatid-specific protein S2 (Scyliorhinus canicula (Small-spotted catshark)).